The primary structure comprises 471 residues: Abscisic acid 8'-hydroxylase 1 (471 aa).

The chain crosses the membrane as a helical span at residues 1–21 (MGAFLLFVCVLAPFLLVCAVR). Residue Cys415 coordinates heme.

The protein belongs to the cytochrome P450 family. Heme is required as a cofactor. In terms of tissue distribution, in seedlings and expanding leaves.

It is found in the membrane. The catalysed reaction is 2-cis-(+)-abscisate + reduced [NADPH--hemoprotein reductase] + O2 = (+)-8'-hydroxyabscisate + oxidized [NADPH--hemoprotein reductase] + H2O + H(+). It participates in plant hormone degradation; abscisic acid degradation. Its function is as follows. Involved in the oxidative degradation of abscisic acid. The chain is Abscisic acid 8'-hydroxylase 1 (CYP707A5) from Oryza sativa subsp. indica (Rice).